Consider the following 319-residue polypeptide: Probable murein peptide carboxypeptidase (319 aa).

Catalysis depends on S116, which acts as the Nucleophile. Residues E214 and H284 each act as charge relay system in the active site.

This sequence belongs to the peptidase S66 family.

It localises to the cytoplasm. It functions in the pathway cell wall degradation; peptidoglycan degradation. Functionally, may be involved in the degradation of peptidoglycan by catalyzing the cleavage of the terminal D-alanine residue from cytoplasmic murein peptides. This Bacillus subtilis (strain 168) protein is Probable murein peptide carboxypeptidase (ykfA).